The primary structure comprises 247 residues: uncharacterized protein (247 aa).

The N-acetyltransferase domain occupies 70-205; sequence ISLWMGPGNN…QKVPLEIMIR (136 aa).

Belongs to the acetyltransferase family.

The protein localises to the endoplasmic reticulum. Its subcellular location is the golgi apparatus. It localises to the vacuole. This is an uncharacterized protein from Schizosaccharomyces pombe (strain 972 / ATCC 24843) (Fission yeast).